The chain runs to 2925 residues: MAEITLDRTLVLLSSEKQRERSEGLAVSLFVLIVVFVIDPCISSRSSLNDKACHKIFESLFRFISSEKSLYNRGNSKGPSASRLSTCASVLRLAVDALLHNLRAKSVRAVVDHITETLQDTGGSLFELLGVDYTKCLTALLNYPPHVEHLGASEWEKLMGFCLKIMNTQDYEDDRSHTGSDSRSTLDDFLGTGGTPTPSRSMPTLTAREKPKRDKGAISEAVVCIQLLTASVNAPVQEPAAKILHGLVGYVKSSHITGSGHQSAFNSINSVIMRVLSDQSELVQSILLDLIPVICHLWATKLVGLKDELLVTIMLCIVLLTAATRQEPSELLSRYTEDLLGALYKEYIKRPEKDILQVDELVFHQKTSAAVDKILIWPRLESGKSEHNWTVIWAIANLVDLSEEITARSSSPRTSTETLNKRQRLTSMVDEIHRDCASSSGARRVCALQLIPLIPRHHASVDSKSSLLLRLLPNILDENGILASWTMITIASLAGSPNADSPSLRAIWQQAWELTCRASTSQATSRASCILMNSILEYNLLEYSIVAEATSSMLTSVNLNGPSTMSDASLTLWATTTRMTARVNPGSLPNASKQICAWLREVWVIGTVTDRTQLAQLAAFARPLDLLNLLLACTNRHYIPPKPQFRGATSLIAKGWHFLHRSKQLLNYLFQLGGILDFDMWDTDDTIHLETFPRQDPNDNMVLDLLQVKSEMFLQAFQSLYEDKSHHVTVEIVQIVTSFCILVALYTECLPHLSASKFHNLQQNCERLWEIICTFLASHELEFIQGCLVVLSPFLNPEQFSYNPESTISKALLRLVIPLVSLLEAYRRSQRDNLALHNDEPMDLDDTLFNSKDRLAEVTSIVKSNREALPLFQEFSSFQRCITIQLSVLQKTNAFLRNHDQHSSRALVEYLIDLDEVDILAASNSLPYVYRAISGMDRTSLLDILEDLAEKCLQTYELERCEASHLLCIHMMHSFVKAWVSSEADSLSGSASDIYTWFRDVLLAKDMASPSVLVVFSELLVDVINTNASYSSGESNTSPRTSLLKILEKGSIPVKFDVGNLIPRLFGHYSLNDHDAIFNDVLRHLPKESDWVEGIALRLFILGQLASRWHTLLRRSIYHMFETPAHVPHSLQYAEKCICDVANKLGLKDAKELFRLFSSQILYTWTEQESITAMPFSIFSYASIKDMLGDVQDELVGQIIMRAREDEEIEMSKYMGKPFVDLLATSFYKAEAYSIARDISTPPGQGSQPKGVETRLKKILGTEQFMELIDQQFPQTIAAFFGSLDQYEQVERALSKRAKFHDALDGLRCILGKSASKIVLPANQQPSFRARYLIDELEFLCKRSGYELETIWTPTLASYVCRTLLESIHPALGSFHACSVIRKIRVLLCVAGSVMLRDYPFEMTLHAMLPFLVDIYCSEDALGIFWYLLEAGQPYLAETPGLMAGVAVSTLLSLKKFLASPPVDTAQQGQSKIVTANIERFLQWFGEYINTYESSLDAETQESFRRVVKSSQATSTVESHSDDSNERDVILEILDDRSSERSLLSKTVSDHVIALLCADSEEPLGNYHKLNESDRDATANIVAIYQTLQSFNTGSGYRLWAAKVIGRAFATTGKVCDALLREQDLSLFKSQLSDLRLEVHCYSKASILQELCNMLQNNSHLEVGLVERTLQLIISNLARYPDFEQCAGVVPLYLMKAFTWDPYQCPPIPTLAPETERDDAKVNWQTSNSLSQWARGIALFLSKSAAEDPVIGSLSHIIYVIPELAVRILPYMLHDVLLAELKGEANIRQKVSQIFKQALCDVHDTTISHARLAIDCILYLRNQPKPNEATIVERDEWLEIDFAEASLAASRCRLPKTALIFLEIHASRVIFGSRRSSLAKYEAPPDMLHDIFKDIDDPDFFYGIQQSPSLDSVMERLQHESSGFKNLLFQSAQYDSEIQMSADQNAYGVLKALNSTNLQGIANSIFSASGGGFVDTSSSFDSMLQAATNLRQWDIPVSPLNPSPPATVFRAFQSLNTSGSLAEASKSINECLLTTLESLTSASRSAMSLRTAMRVLGVITEVSDVLDARSTEEIDHEWQKIAARDSWLKTTSVHEIGEILNSHEALFSSINRKSYLRSSTNISDHDAQLLEVKAIRQSLHITRTQGIQQASLKSAVYLSKLAHQCSALGINIEGAAKFDLANVLWDQGEMTASIRMLHQLKDQNDLHKQAVPISRAELLVTLVSSLHIDSLRTKPCSFRTNSTSCKGHHVAEARLEKPETIIQDYLLTAVKELKGRSGGEEAGRVYHGFATFCDQQLQNPDGLEDFTRVEQLRNRKEKEVRALEDMMKAAEGREREALKFHRGRTKQWFDLDDREYQRLRRSREAFLQQCLENYLLCLRESETYNNDVLRFCALWLDKSDSDIANAAVSKHLGQVPSRKFAPLMNQLTSRLLDVPDEFQKMLFSLITRICVEHPFHGMYQIFASSKSKGGKDETALSRNRAAGRLVEGLKNDKRIGPTWVAVHNTNINYVRFAIDRPDEKLKSGARVPLRKLQTGGRLEQDAATQKLPPPTMNIEIRVDCDYRDVPKLVKYHPEFTIASGVSAPKIVSAFASNGLRYKQLFKGGNDDLRQDAIMEQVFEQVSNLLKDHQATRQRNLGIRTYKVLPLTSNAGIIEFVPHTIPLHDYLMPAHQKYYPKDMKPNVCRKHISDVQTRSFEQRVRTYRQVTEHFHPVMKYFFMEKFNNPDDWFSKRLSYTRSTAAISILGHVLGLGDRHGHNILLDERTGEVVHIDLGVAFEQGRVLPVPEVVPFRLTRDLVDGMGVTKTEGVFRRCCEFTLETLRRESYSIMTILDVLRYDPLYSWTVSPLRMKKMQDASEAGGGPPMLPGAADQRPSNEPSEADRALTVVAKKLGKTLSVTATVNELIQQATDEKNLAVLYCGWAAYA.

The segment at 172–211 (EDDRSHTGSDSRSTLDDFLGTGGTPTPSRSMPTLTAREKP) is disordered. Positions 174–186 (DRSHTGSDSRSTL) are enriched in basic and acidic residues. Residues 195 to 204 (TPTPSRSMPT) are compositionally biased toward polar residues. In terms of domain architecture, FAT spans 1844 to 2467 (EASLAASRCR…MYQIFASSKS (624 aa)). The region spanning 2571-2882 (YHPEFTIASG…PSNEPSEADR (312 aa)) is the PI3K/PI4K catalytic domain. Positions 2577–2583 (IASGVSA) are G-loop. Positions 2749–2757 (GLGDRHGHN) are catalytic loop. The interval 2769-2793 (HIDLGVAFEQGRVLPVPEVVPFRLT) is activation loop. Positions 2853-2879 (QDASEAGGGPPMLPGAADQRPSNEPSE) are disordered. Residues 2893–2925 (KTLSVTATVNELIQQATDEKNLAVLYCGWAAYA) enclose the FATC domain.

The protein belongs to the PI3/PI4-kinase family. ATM subfamily. In terms of assembly, associates with DNA double-strand breaks.

It localises to the nucleus. Its subcellular location is the chromosome. It is found in the telomere. The enzyme catalyses L-seryl-[protein] + ATP = O-phospho-L-seryl-[protein] + ADP + H(+). The catalysed reaction is L-threonyl-[protein] + ATP = O-phospho-L-threonyl-[protein] + ADP + H(+). Its function is as follows. Serine/threonine protein kinase which activates checkpoint signaling upon genotoxic stresses such as ionizing radiation (IR), ultraviolet light (UV), or DNA replication stalling, thereby acting as a DNA damage sensor. Recognizes the substrate consensus sequence [ST]-Q. Phosphorylates histone H2A to form H2AS128ph (gamma-H2A) at sites of DNA damage, involved in the regulation of DNA damage response mechanism. Required for the control of telomere length and genome stability. The chain is Serine/threonine-protein kinase tel1 (tel1) from Aspergillus oryzae (strain ATCC 42149 / RIB 40) (Yellow koji mold).